The chain runs to 205 residues: Ras-related protein Rab-1A (205 aa).

Residue serine 2 is modified to N-acetylserine. The GTP site is built by serine 20, glycine 21, glycine 23, lysine 24, serine 25, cysteine 26, glutamate 38, and threonine 43. Serine 25 is a binding site for Mg(2+). Residues 34–48 (DTYTESYISTIGVDF) carry the Switch 1 motif. Threonine 43 lines the Mg(2+) pocket. Residues lysine 49 and lysine 61 each participate in a glycyl lysine isopeptide (Lys-Gly) (interchain with G-Cter in ubiquitin) cross-link. Mg(2+) is bound at residue aspartate 66. The Switch 2 motif lies at 66–83 (DTAGQERFRTITSSYYRG). Residues glycine 69, asparagine 124, lysine 125, aspartate 127, alanine 155, and lysine 156 each contribute to the GTP site. The tract at residues 178–205 (PGATAGGAEKSNVKIQSTPVKQSGGGCC) is disordered. Serine 194 carries the phosphoserine; by CDK1 modification. S-geranylgeranyl cysteine attachment occurs at residues cysteine 204 and cysteine 205.

The protein belongs to the small GTPase superfamily. Rab family. As to quaternary structure, may interact with YIPF5. Interacts with C9orf72; the interaction mediates recruitment of RAB1A to the ATG1/ULK1 kinase complex. Interacts with GDI1; this promotes dissociation from membranes. Mg(2+) serves as cofactor. Post-translationally, phosphorylated by CDK1 kinase during mitosis. Ubiquitinated via 'Lys-11'-linked ubiquitination on Lys-49 and Lys-61; impairing the recruitment of guanosine diphosphate (GDP) dissociation inhibitor 1/GDI1.

The protein localises to the golgi apparatus. It is found in the endoplasmic reticulum. The protein resides in the early endosome. It localises to the cytoplasm. Its subcellular location is the cytosol. The protein localises to the membrane. It is found in the melanosome. The enzyme catalyses GTP + H2O = GDP + phosphate + H(+). Regulated by guanine nucleotide exchange factors (GEFs) which promote the exchange of bound GDP for free GTP. Regulated by GTPase activating proteins (GAPs) which increase the GTP hydrolysis activity. Inhibited by GDP dissociation inhibitors (GDIs). The small GTPases Rab are key regulators of intracellular membrane trafficking, from the formation of transport vesicles to their fusion with membranes. Rabs cycle between an inactive GDP-bound form and an active GTP-bound form that is able to recruit to membranes different sets of downstream effectors directly responsible for vesicle formation, movement, tethering and fusion. RAB1A regulates vesicular protein transport from the endoplasmic reticulum (ER) to the Golgi compartment and on to the cell surface, and plays a role in IL-8 and growth hormone secretion. Required to modulate the compacted morphology of the Golgi. Regulates the level of CASR present at the cell membrane. Plays a role in cell adhesion and cell migration, via its role in protein trafficking. Plays a role in autophagosome assembly and cellular defense reactions against pathogenic bacteria. Plays a role in microtubule-dependent protein transport by early endosomes and in anterograde melanosome transport. In Sus scrofa (Pig), this protein is Ras-related protein Rab-1A (RAB1A).